Reading from the N-terminus, the 323-residue chain is AA9 family lytic polysaccharide monooxygenase B (323 aa).

Residues 1–18 (MKSFTLTTLAALAGNAAA) form the signal peptide. His19 and His97 together coordinate Cu(2+). Cys56 and Cys191 form a disulfide bridge. 2 residues coordinate O2: His177 and Gln186. Residue Tyr188 participates in Cu(2+) binding. The 38-residue stretch at 286 to 323 (CTVQKYQQCGGQGYTGCTNCASGSTCSAVSPPYYSQCV) folds into the CBM1 domain.

Belongs to the polysaccharide monooxygenase AA9 family. It depends on Cu(2+) as a cofactor.

The protein localises to the secreted. The enzyme catalyses [(1-&gt;4)-beta-D-glucosyl]n+m + reduced acceptor + O2 = 4-dehydro-beta-D-glucosyl-[(1-&gt;4)-beta-D-glucosyl]n-1 + [(1-&gt;4)-beta-D-glucosyl]m + acceptor + H2O.. Is able to utilize various natural phenolic compounds as reducing agents. Most of these reducing agents are present in plants, either free or as lignin building blocks, such as sinapic acid, or as flavonoids such as catechin and dopamine. Phenolic compounds with 1,2-benzenediol and 1,2,3-benzenetriol moieties yield the highest release of oxidized and non-oxidized glucooligosaccharides from cellulose compared to monophenols or sulfur-containing compounds. Its function is as follows. Lytic polysaccharide monooxygenase (LPMO) that depolymerizes crystalline and amorphous polysaccharides via the oxidation of scissile alpha- or beta-(1-4)-glycosidic bonds, yielding C1 oxidation products. Catalysis by LPMOs requires the reduction of the active-site copper from Cu(II) to Cu(I) by a reducing agent and H(2)O(2) or O(2) as a cosubstrate. Is active on regenerated amorphous cellulose (RAC). The protein is AA9 family lytic polysaccharide monooxygenase B of Thermothelomyces thermophilus (strain ATCC 42464 / BCRC 31852 / DSM 1799) (Sporotrichum thermophile).